The chain runs to 130 residues: Sec-independent protein translocase protein TatB (130 aa).

The helical transmembrane segment at 2–22 (FANIGWGEMLVLVVVGLVVLG) threads the bilayer. The tract at residues 108–130 (DAVASAQEAPDEPVRPPFDSDAT) is disordered.

The protein belongs to the TatB family. As to quaternary structure, the Tat system comprises two distinct complexes: a TatABC complex, containing multiple copies of TatA, TatB and TatC subunits, and a separate TatA complex, containing only TatA subunits. Substrates initially bind to the TatABC complex, which probably triggers association of the separate TatA complex to form the active translocon.

Its subcellular location is the cell membrane. In terms of biological role, part of the twin-arginine translocation (Tat) system that transports large folded proteins containing a characteristic twin-arginine motif in their signal peptide across membranes. Together with TatC, TatB is part of a receptor directly interacting with Tat signal peptides. TatB may form an oligomeric binding site that transiently accommodates folded Tat precursor proteins before their translocation. In Mycobacterium ulcerans (strain Agy99), this protein is Sec-independent protein translocase protein TatB.